A 1678-amino-acid chain; its full sequence is Hispidin synthase (1678 aa).

The tract at residues glycine 33–glutamine 453 is adenylation (A) domain. Positions aspartate 586–leucine 661 constitute a Carrier 1 domain. O-(pantetheine 4'-phosphoryl)serine is present on serine 620. Positions glycine 683–alanine 1108 constitute a Ketosynthase family 3 (KS3) domain. Residues cysteine 852, histidine 988, and histidine 1029 each act as for beta-ketoacyl synthase activity in the active site. The tract at residues tyrosine 1201–glycine 1499 is malonyl-CoA:ACP transacylase (MAT) domain. The interval glutamate 1562 to glycine 1582 is disordered. The span at threonine 1564–asparagine 1576 shows a compositional bias: polar residues. A Carrier 2 domain is found at aspartate 1597–alanine 1672. Serine 1632 is modified (O-(pantetheine 4'-phosphoryl)serine).

In the N-terminal section; belongs to the NRP synthetase family.

The enzyme catalyses (E)-caffeate + 2 malonyl-CoA + ATP + H(+) = hispidin + AMP + 2 CO2 + diphosphate + 2 CoA. The protein operates within secondary metabolite biosynthesis. Its function is as follows. PKS-NRPS hybrid synthetase; part of the gene cluster that mediates the fungal bioluminescence cycle. Performs the biosynthesis of hispidin from caffeic acid by two cycles of addition of malonyl units followed by lactonization. The fungal bioluminescence cycle begins with the hispidin synthetase that catalyzes the formation of hispidin which is further hydroxylated by the hispidin-3-hydroxylase, yielding the fungal luciferin 3-hydroxyhispidin. The luciferase then produces an endoperoxide as a high-energy intermediate with decomposition that yields oxyluciferin (also known as caffeoylpyruvate) and light emission. Oxyluciferin can be recycled to caffeic acid by caffeoylpyruvate hydrolase. This is Hispidin synthase from Neonothopanus nambi (Agaricus nambi).